A 522-amino-acid polypeptide reads, in one-letter code: 2-isopropylmalate synthase (522 aa).

The Pyruvate carboxyltransferase domain occupies 5-267 (VIIFDTTLRD…ETGINAKEIH (263 aa)). The Mn(2+) site is built by aspartate 14, histidine 202, histidine 204, and asparagine 238. Residues 392–522 (QLQQLVVQSD…MQKNRELGGV (131 aa)) are regulatory domain.

It belongs to the alpha-IPM synthase/homocitrate synthase family. LeuA type 1 subfamily. In terms of assembly, homodimer. It depends on Mn(2+) as a cofactor.

It localises to the cytoplasm. The catalysed reaction is 3-methyl-2-oxobutanoate + acetyl-CoA + H2O = (2S)-2-isopropylmalate + CoA + H(+). The protein operates within amino-acid biosynthesis; L-leucine biosynthesis; L-leucine from 3-methyl-2-oxobutanoate: step 1/4. In terms of biological role, catalyzes the condensation of the acetyl group of acetyl-CoA with 3-methyl-2-oxobutanoate (2-ketoisovalerate) to form 3-carboxy-3-hydroxy-4-methylpentanoate (2-isopropylmalate). This chain is 2-isopropylmalate synthase, found in Shewanella baltica (strain OS185).